A 427-amino-acid polypeptide reads, in one-letter code: Imidazolonepropionase (427 aa).

Fe(3+) is bound by residues His-81 and His-83. Zn(2+)-binding residues include His-81 and His-83. 4-imidazolone-5-propanoate contacts are provided by Arg-90, Tyr-153, and His-186. Tyr-153 lines the N-formimidoyl-L-glutamate pocket. Position 260 (His-260) interacts with Fe(3+). His-260 lines the Zn(2+) pocket. Glu-263 is a 4-imidazolone-5-propanoate binding site. Fe(3+) is bound at residue Asp-335. Residue Asp-335 coordinates Zn(2+). Asn-337 and Gly-339 together coordinate N-formimidoyl-L-glutamate. 4-imidazolone-5-propanoate is bound at residue Ser-340.

This sequence belongs to the metallo-dependent hydrolases superfamily. HutI family. Requires Zn(2+) as cofactor. It depends on Fe(3+) as a cofactor.

It is found in the cytoplasm. It catalyses the reaction 4-imidazolone-5-propanoate + H2O = N-formimidoyl-L-glutamate. Its pathway is amino-acid degradation; L-histidine degradation into L-glutamate; N-formimidoyl-L-glutamate from L-histidine: step 3/3. In terms of biological role, catalyzes the hydrolytic cleavage of the carbon-nitrogen bond in imidazolone-5-propanoate to yield N-formimidoyl-L-glutamate. It is the third step in the universal histidine degradation pathway. This chain is Imidazolonepropionase, found in Chloroflexus aggregans (strain MD-66 / DSM 9485).